The sequence spans 566 residues: Oxygen-dependent choline dehydrogenase (566 aa).

Residue 7 to 36 coordinates FAD; that stretch reads DYIICGAGSAGNVLATRLTEDPNVTVLLLE. The tract at residues 185–204 is disordered; that stretch reads EGFGPMDRTVTPKGRRASTA. The active-site Proton acceptor is the His-474.

Belongs to the GMC oxidoreductase family. FAD serves as cofactor.

It carries out the reaction choline + A = betaine aldehyde + AH2. It catalyses the reaction betaine aldehyde + NAD(+) + H2O = glycine betaine + NADH + 2 H(+). It functions in the pathway amine and polyamine biosynthesis; betaine biosynthesis via choline pathway; betaine aldehyde from choline (cytochrome c reductase route): step 1/1. In terms of biological role, involved in the biosynthesis of the osmoprotectant glycine betaine. Catalyzes the oxidation of choline to betaine aldehyde and betaine aldehyde to glycine betaine at the same rate. This chain is Oxygen-dependent choline dehydrogenase, found in Burkholderia vietnamiensis (strain G4 / LMG 22486) (Burkholderia cepacia (strain R1808)).